Here is a 114-residue protein sequence, read N- to C-terminus: T cell receptor beta variable 6-5 (114 aa).

The signal sequence occupies residues 1-21 (MSIGLLCCAALSLLWAGPVNA). The Ig-like domain maps to 22-114 (GVTQTPKFQV…TSVYFCASSY (93 aa)). Residues C42 and C110 are joined by a disulfide bond. N84 is a glycosylation site (N-linked (GlcNAc...) asparagine).

As to quaternary structure, alpha-beta TR is a heterodimer composed of an alpha and beta chain; disulfide-linked. The alpha-beta TR is associated with the transmembrane signaling CD3 coreceptor proteins to form the TR-CD3 (TcR or TCR). The assembly of alpha-beta TR heterodimers with CD3 occurs in the endoplasmic reticulum where a single alpha-beta TR heterodimer associates with one CD3D-CD3E heterodimer, one CD3G-CD3E heterodimer and one CD247 homodimer forming a stable octameric structure. CD3D-CD3E and CD3G-CD3E heterodimers preferentially associate with TR alpha and TR beta chains, respectively. The association of the CD247 homodimer is the last step of TcR assembly in the endoplasmic reticulum and is required for transport to the cell surface.

Its subcellular location is the cell membrane. V region of the variable domain of T cell receptor (TR) beta chain that participates in the antigen recognition. Alpha-beta T cell receptors are antigen specific receptors which are essential to the immune response and are present on the cell surface of T lymphocytes. Recognize peptide-major histocompatibility (MH) (pMH) complexes that are displayed by antigen presenting cells (APC), a prerequisite for efficient T cell adaptive immunity against pathogens. Binding of alpha-beta TR to pMH complex initiates TR-CD3 clustering on the cell surface and intracellular activation of LCK that phosphorylates the ITAM motifs of CD3G, CD3D, CD3E and CD247 enabling the recruitment of ZAP70. In turn ZAP70 phosphorylates LAT, which recruits numerous signaling molecules to form the LAT signalosome. The LAT signalosome propagates signal branching to three major signaling pathways, the calcium, the mitogen-activated protein kinase (MAPK) kinase and the nuclear factor NF-kappa-B (NF-kB) pathways, leading to the mobilization of transcription factors that are critical for gene expression and essential for T cell growth and differentiation. The T cell repertoire is generated in the thymus, by V-(D)-J rearrangement. This repertoire is then shaped by intrathymic selection events to generate a peripheral T cell pool of self-MH restricted, non-autoaggressive T cells. Post-thymic interaction of alpha-beta TR with the pMH complexes shapes TR structural and functional avidity. The protein is T cell receptor beta variable 6-5 of Homo sapiens (Human).